The primary structure comprises 365 residues: Aspartate-semialdehyde dehydrogenase (365 aa).

Residues T13, G14, S15, V16, S38, S41, L85, and D86 each contribute to the NADP(+) site. A Phosphothreonine modification is found at T13. The active-site Acyl-thioester intermediate is the C156. G188 lines the NADP(+) pocket. H256 acts as the Proton acceptor in catalysis. Phosphoserine is present on residues S318 and S323. N343 is an NADP(+) binding site.

Belongs to the aspartate-semialdehyde dehydrogenase family. Homotetramer.

It localises to the cytoplasm. The protein localises to the cytosol. Its subcellular location is the nucleus. The catalysed reaction is L-aspartate 4-semialdehyde + phosphate + NADP(+) = 4-phospho-L-aspartate + NADPH + H(+). It participates in amino-acid biosynthesis; L-methionine biosynthesis via de novo pathway; L-homoserine from L-aspartate: step 2/3. The protein operates within amino-acid biosynthesis; L-threonine biosynthesis; L-threonine from L-aspartate: step 2/5. Catalyzes the NADPH-dependent formation of L-aspartate 4-semialdehyde (L-ASA) by the reductive dephosphorylation of 4-phospho-L-aspartate. Mediates the second step in the biosynthesis of amino acids that derive from aspartate (the aspartate family of amino acids), including methioinine and threonine, the latter of which is a precursor to isoleucine. The polypeptide is Aspartate-semialdehyde dehydrogenase (HOM2) (Saccharomyces cerevisiae (strain ATCC 204508 / S288c) (Baker's yeast)).